A 110-amino-acid chain; its full sequence is Ribonuclease (110 aa).

Catalysis depends on glutamate 73, which acts as the Proton acceptor. Catalysis depends on histidine 102, which acts as the Proton donor.

It belongs to the ribonuclease N1/T1 family.

The protein localises to the secreted. Hydrolyzes phosphodiester bonds in RNA, poly- and oligoribonucleotides resulting in 3'-nucleoside monophosphates via 2',3'-cyclophosphate intermediates. The sequence is that of Ribonuclease from Niallia circulans (Bacillus circulans).